The sequence spans 2186 residues: Non-reducing polyketide synthase men2 (2186 aa).

Positions 16–255 (FFGDQTVDAL…MQLPLGTPAH (240 aa)) constitute a Starter acyltransferase (SAT) domain. Residues 382 to 815 (SNLIAVVGQS…GGNNCVLLEE (434 aa)) enclose the Ketosynthase family 3 (KS3) domain. Catalysis depends on for beta-ketoacyl synthase activity residues C554, H690, and H729. A Malonyl-CoA:ACP transacylase (MAT) domain is found at 914–1204 (VFAFTGQGAQ…SSLVKSTLSA (291 aa)). The segment at 1299-1623 (TASLQQVRSE…TRRVLATVLG (325 aa)) is product template (PT) domain. An N-terminal hotdog fold region spans residues 1303 to 1434 (QQVRSEQING…CKLHFDKRGS (132 aa)). In terms of domain architecture, PKS/mFAS DH spans 1303 to 1619 (QQVRSEQING…FQRLTRRVLA (317 aa)). H1335 serves as the catalytic Proton acceptor; for dehydratase activity. The segment at 1463-1619 (TGHRLPKSVV…FQRLTRRVLA (157 aa)) is C-terminal hotdog fold. D1523 acts as the Proton donor; for dehydratase activity in catalysis. The 77-residue stretch at 1666-1742 (VGDEKADAAI…GLRRAISELS (77 aa)) folds into the Carrier 1 domain. At S1702 the chain carries O-(pantetheine 4'-phosphoryl)serine. Residues 1747–1785 (GPASGSVSVSSSATTTHGMTTPSSTSSAQSSQSSQTPDG) are disordered. The span at 1749–1783 (ASGSVSVSSSATTTHGMTTPSSTSSAQSSQSSQTP) shows a compositional bias: low complexity. Positions 1784–1861 (DGPGIYANAV…HVRRALGSDS (78 aa)) constitute a Carrier 2 domain. Residue S1821 is modified to O-(pantetheine 4'-phosphoryl)serine. The tract at residues 1857 to 1878 (LGSDSDGDSKPKSAPAPPAPEP) is disordered. A thioesterase (TE) domain region spans residues 1921–2163 (LFFLPDGTGY…TMPCDHLSLL (243 aa)).

Pantetheine 4'-phosphate is required as a cofactor.

The protein operates within secondary metabolite biosynthesis. In terms of biological role, non-reducing polyketide synthase; part of the gene cluster that mediates the biosynthesis of menisporopsin A, a bioactive macrocyclic polylactone. The biosynthesis of menisporopsin A is performed by a reducing (man1) and a non-reducing (men2) polyketide synthase that catalyze the formation of each menisporopsin A subunits, while the esterification and cyclolactonization activities are probably peformed by the unusual thioesterase domain of men2. First, a reduced diketide intermediate, 3-hydroxybutyryl-S-ACP is produced by men1 and transferred to men2; this is followed by a second reduced diketide which is further elongated using 3 units of malonyl-coA to form a reduced pentaketide. The cyclization of this intermediate by the PT domain forms the second subunit, 2,4-dihydroxy-6-(2-hydroxy-n-propyl)benzoyl-S-ACP. The TE domain of men2 then esterifies the secondary hydroxyl group on the side chain of the second subunit with the acyl-TE of the first subunit to form the first ester intermediate. This process occurs iteratively to form a linear tetraester intermediate. The final subunit is formed by a similar process, except that an extra malonyl-CoA is required in an additional elongation step to form a reduced hexaketide intermediate, and the carbonyl group next to the secondary hydroxyl group is reduced by a trans-acting ketoreductase. Again, the PT domain catalyzes cyclization to form the largest subunit, 2,4-dihydroxy-6-(2,4-dihydroxy-n-pentyl) benzoyl-S-ACP. Then the linear pentaester intermediate is formed. In this step, if the intermediate transfer rate is slow, intra- molecular cyclization involving the secondary hydroxyl group of the pentaester intermediate may occur to form menisporopsin B. Alternatively, transfer of the pentaester intermediate to the TE domain would allow cyclolactonization to be catalyzed by the TE to form menisporopsin A. In Menisporopsis theobromae, this protein is Non-reducing polyketide synthase men2.